A 50-amino-acid polypeptide reads, in one-letter code: PhoP/PhoQ regulator MgrB (50 aa).

Topologically, residues 1 to 4 (MLDL) are cytoplasmic. Residues 5–27 (NITKLVTTVVIIAACCLFYLLAL) traverse the membrane as a helical segment. At 28–50 (DSYCDQGGTFSTGICAITTIVPW) the chain is on the periplasmic side.

This sequence belongs to the MgrB family. In terms of assembly, probably interacts with the periplasmic domain of PhoQ.

The protein resides in the cell inner membrane. PhoP-regulated transcription is redox-sensitive, being activated when the periplasm becomes more reducing. MgrB acts between DsbA/DsbB and PhoP/PhoQ in this pathway. Represses PhoP/PhoQ signaling, possibly by binding to the periplasmic domain of PhoQ, altering its activity and that of downstream effector PhoP. The protein is PhoP/PhoQ regulator MgrB of Yersinia pestis.